Here is a 613-residue protein sequence, read N- to C-terminus: Probable Xaa-Pro aminopeptidase P (613 aa).

Asp-408, Asp-419, Glu-517, and Glu-531 together coordinate Mn(2+).

The protein belongs to the peptidase M24B family. Requires Mn(2+) as cofactor.

It catalyses the reaction Release of any N-terminal amino acid, including proline, that is linked to proline, even from a dipeptide or tripeptide.. Catalyzes the removal of a penultimate prolyl residue from the N-termini of peptides. The chain is Probable Xaa-Pro aminopeptidase P (ampp) from Penicillium rubens (strain ATCC 28089 / DSM 1075 / NRRL 1951 / Wisconsin 54-1255) (Penicillium chrysogenum).